The following is a 559-amino-acid chain: Forkhead box protein O6 (559 aa).

2 disordered regions span residues 1-77 (MAAK…VGPL) and 163-183 (SWWMLNPEGGKTGKTPRRRAV). A DNA-binding region (fork-head) is located at residues 88-182 (WGNLSYADLI…KTGKTPRRRA (95 aa)). Ser184 carries the phosphoserine modification. Disordered stretches follow at residues 197–232 (KASKKKQLHLPERSPDDSPPGAPVPGPLSASAKWAA) and 534–559 (NFDSALPPPPPGLAGAPPPNQSWVPG). 2 stretches are compositionally biased toward pro residues: residues 213–222 (DSPPGAPVPG) and 539–553 (LPPPPPGLAGAPPPN).

Post-translationally, phosphorylation of Ser-184 is be important in regulating the transacriptional activity. In terms of tissue distribution, expressed in brain in areas of the nucleus accumbens, cingulate cortex, parts of the amygdala and in the hippocampus.

The protein localises to the cytoplasm. It localises to the nucleus. Transcriptional activator. The sequence is that of Forkhead box protein O6 (Foxo6) from Mus musculus (Mouse).